Reading from the N-terminus, the 338-residue chain is Photosystem II assembly lipoprotein Ycf48 (338 aa).

Residues 1–23 (MKKIITSFPNLLLSILLCFVLSS) form the signal peptide. Cysteine 24 is lipidated: N-palmitoyl cysteine. Cysteine 24 carries S-diacylglycerol cysteine lipidation.

It belongs to the Ycf48 family. In terms of assembly, part of early PSII assembly complexes which includes D1 (psbA) and PsbI; not found in mature PSII. Binds to the lumenal side of PSII complexes. Interacts with YidC.

The protein localises to the cellular thylakoid membrane. Functionally, a factor required for optimal assembly of photosystem II (PSII), acting in the early stages of PSII assembly. Also plays a role in replacement of photodamaged D1 (psbA). Assists YidC in synthesis of chlorophyll-binding proteins. This chain is Photosystem II assembly lipoprotein Ycf48, found in Prochlorococcus marinus (strain MIT 9312).